We begin with the raw amino-acid sequence, 360 residues long: Putative F-box protein At3g16210 (360 aa).

The F-box domain occupies 1–48 (MSKFLPEELAIEILVRLSMKDLARFRCVCKTWRDLINDPGFTETYRDM).

The sequence is that of Putative F-box protein At3g16210 from Arabidopsis thaliana (Mouse-ear cress).